A 1131-amino-acid polypeptide reads, in one-letter code: cGMP-specific 3',5'-cyclic phosphodiesterase (1131 aa).

Disordered regions lie at residues 1–26 (MTDV…SAAT) and 42–150 (GVAP…SQQD). A compositionally biased stretch (low complexity) spans 42–63 (GVAPGAVPGPGSAAIPASSSSG). Residues 75–86 (SNNNRPAATNRS) show a composition bias toward polar residues. Residues 110 to 136 (SSSTPSQSPSPSQSPSQASIQTQTSQQ) show a composition bias toward low complexity. GAF domains follow at residues 255-412 (DIDV…GIGI) and 444-625 (NLEC…GLGI). In terms of domain architecture, PDEase spans 655-978 (SQDQTEKLTQ…RNWQDLAEKV (324 aa)). The Proton donor role is filled by His731. Residues His735, His771, Asp772, and Asp882 each coordinate a divalent metal cation. Disordered regions lie at residues 1019–1048 (QQSQ…TGAL) and 1078–1131 (SHVS…CALL). Composition is skewed to basic and acidic residues over residues 1024-1035 (GSEDSHTPEHQR) and 1078-1088 (SHVSEDMDDKS). Over residues 1097-1117 (ASGSMGRMSASSSTSSAGGQM) the composition is skewed to low complexity. The segment covering 1121–1131 (SKKRSKLCALL) has biased composition (basic residues). Cysteine methyl ester is present on Cys1128. Residue Cys1128 is the site of S-farnesyl cysteine attachment. A propeptide spans 1129-1131 (ALL) (removed in mature form).

Belongs to the cyclic nucleotide phosphodiesterase family. As to quaternary structure, interacts with PrBP. Requires a divalent metal cation as cofactor.

It localises to the cell membrane. It catalyses the reaction 3',5'-cyclic GMP + H2O = GMP + H(+). In terms of biological role, has a role regulating cGMP transport in Malpighian tubule principal cells. The chain is cGMP-specific 3',5'-cyclic phosphodiesterase from Drosophila erecta (Fruit fly).